The primary structure comprises 194 residues: Fe/S biogenesis protein NfuA (194 aa).

The [4Fe-4S] cluster site is built by cysteine 152 and cysteine 155.

It belongs to the NfuA family. Homodimer. Requires [4Fe-4S] cluster as cofactor.

Functionally, involved in iron-sulfur cluster biogenesis. Binds a 4Fe-4S cluster, can transfer this cluster to apoproteins, and thereby intervenes in the maturation of Fe/S proteins. Could also act as a scaffold/chaperone for damaged Fe/S proteins. The sequence is that of Fe/S biogenesis protein NfuA from Pseudomonas aeruginosa (strain LESB58).